Consider the following 329-residue polypeptide: Beta-ketoacyl-[acyl-carrier-protein] synthase III (329 aa).

Residues C123 and H256 contribute to the active site. The interval 257-261 is ACP-binding; the sequence is QANIR. N286 is an active-site residue.

Belongs to the thiolase-like superfamily. FabH family. In terms of assembly, homodimer.

The protein resides in the cytoplasm. The catalysed reaction is malonyl-[ACP] + acetyl-CoA + H(+) = 3-oxobutanoyl-[ACP] + CO2 + CoA. It functions in the pathway lipid metabolism; fatty acid biosynthesis. Functionally, catalyzes the condensation reaction of fatty acid synthesis by the addition to an acyl acceptor of two carbons from malonyl-ACP. Catalyzes the first condensation reaction which initiates fatty acid synthesis and may therefore play a role in governing the total rate of fatty acid production. Possesses both acetoacetyl-ACP synthase and acetyl transacylase activities. Its substrate specificity determines the biosynthesis of branched-chain and/or straight-chain of fatty acids. This chain is Beta-ketoacyl-[acyl-carrier-protein] synthase III, found in Burkholderia thailandensis (strain ATCC 700388 / DSM 13276 / CCUG 48851 / CIP 106301 / E264).